The following is a 139-amino-acid chain: Small ribosomal subunit protein uS12m (139 aa).

A mitochondrion-targeting transit peptide spans 1–29 (MSWSGLLRGLSMSLNYGLALAPRPWGTRP). The tract at residues 37–57 (HRRGPPKFPPSKPGPTEGRPQ) is disordered.

Belongs to the universal ribosomal protein uS12 family. In terms of assembly, component of the mitochondrial ribosome small subunit (28S) which comprises a 12S rRNA and about 30 distinct proteins.

Its subcellular location is the mitochondrion. The polypeptide is Small ribosomal subunit protein uS12m (MRPS12) (Bos taurus (Bovine)).